The following is a 293-amino-acid chain: 4-diphosphocytidyl-2-C-methyl-D-erythritol kinase (293 aa).

The active site involves lysine 11. 96 to 106 (PVAAGLGGGSS) is a binding site for ATP. Aspartate 138 is a catalytic residue.

Belongs to the GHMP kinase family. IspE subfamily.

The catalysed reaction is 4-CDP-2-C-methyl-D-erythritol + ATP = 4-CDP-2-C-methyl-D-erythritol 2-phosphate + ADP + H(+). It functions in the pathway isoprenoid biosynthesis; isopentenyl diphosphate biosynthesis via DXP pathway; isopentenyl diphosphate from 1-deoxy-D-xylulose 5-phosphate: step 3/6. Catalyzes the phosphorylation of the position 2 hydroxy group of 4-diphosphocytidyl-2C-methyl-D-erythritol. The sequence is that of 4-diphosphocytidyl-2-C-methyl-D-erythritol kinase from Xanthobacter autotrophicus (strain ATCC BAA-1158 / Py2).